Here is a 326-residue protein sequence, read N- to C-terminus: Acetyl-coenzyme A carboxylase carboxyl transferase subunit alpha (326 aa).

The region spanning 45–298 (LEARAMQLRE…KQVLLENLDE (254 aa)) is the CoA carboxyltransferase C-terminal domain.

Belongs to the AccA family. In terms of assembly, acetyl-CoA carboxylase is a heterohexamer composed of biotin carboxyl carrier protein (AccB), biotin carboxylase (AccC) and two subunits each of ACCase subunit alpha (AccA) and ACCase subunit beta (AccD).

The protein resides in the cytoplasm. The enzyme catalyses N(6)-carboxybiotinyl-L-lysyl-[protein] + acetyl-CoA = N(6)-biotinyl-L-lysyl-[protein] + malonyl-CoA. The protein operates within lipid metabolism; malonyl-CoA biosynthesis; malonyl-CoA from acetyl-CoA: step 1/1. Functionally, component of the acetyl coenzyme A carboxylase (ACC) complex. First, biotin carboxylase catalyzes the carboxylation of biotin on its carrier protein (BCCP) and then the CO(2) group is transferred by the carboxyltransferase to acetyl-CoA to form malonyl-CoA. The protein is Acetyl-coenzyme A carboxylase carboxyl transferase subunit alpha of Nostoc punctiforme (strain ATCC 29133 / PCC 73102).